The primary structure comprises 832 residues: Mechanosensitive cation channel TMEM63B (832 aa).

Residues 1 to 40 lie on the Extracellular side of the membrane; the sequence is MLPFLLATLGTTALNNSNPKDYCYSARIRSTVLQGLPFGG. Residues 41 to 65 traverse the membrane as a helical segment; sequence VPTVLALDFMCFLALLFLFSILRKV. A lipid anchor (S-palmitoyl cysteine) is attached at Cys51. Topologically, residues 66–145 are cytoplasmic; that stretch reads AWDYGRLALV…KDDEIRDKCG (80 aa). A Mediates endoplasmic reticulum retention motif is present at residues 86–88; sequence RDR. Phosphoserine occurs at positions 111, 113, 114, and 115. The S-palmitoyl cysteine moiety is linked to residue Cys126. Residues 146 to 178 traverse the membrane as a helical segment; sequence GDAVHYLSFQRHIIGLLVVVGVLSVGIVLPVNF. Residues 179–202 lie on the Extracellular side of the membrane; that stretch reads SGDLLENNAYSFGRTTIANLKSGN. A helical membrane pass occupies residues 203–227; sequence NLLWLHTSFAFLYLLLTVYSMRRHT. Over 228-427 the chain is Cytoplasmic; sequence SKMRYKEDDL…IYWEHLSIRG (200 aa). The interval 231-426 is intracellular linker IL2; confers mechanosensitivity; that stretch reads RYKEDDLVKR…NIYWEHLSIR (196 aa). S-palmitoyl cysteine attachment occurs at residues Cys382 and Cys398. Residues 428-457 traverse the membrane as a helical segment; that stretch reads FIWWLRCLVINVVLFILLFFLTTPAIIITT. Topologically, residues 458-472 are extracellular; the sequence is MDKFNVTKPVEYLNN. An N-linked (GlcNAc...) asparagine glycan is attached at Asn462. A helical membrane pass occupies residues 473 to 502; that stretch reads PIITQFFPTLLLWCFSALLPTIVYYSAFFE. The Cytoplasmic portion of the chain corresponds to 503–506; it reads AHWT. Residues 507 to 543 traverse the membrane as a helical segment; the sequence is RSGENRTTMHKCYTFLIFMVLLLPSLGLSSLDLFFRW. Over 544-566 the chain is Extracellular; sequence LFDKKFLAEAAIRFECVFLPDNG. Residues 567–599 form a helical membrane-spanning segment; that stretch reads AFFVNYVIASAFIGNAMDLLRIPGLLMYMIRLC. Residues 567 to 599 are gating helix; that stretch reads AFFVNYVIASAFIGNAMDLLRIPGLLMYMIRLC. The Cytoplasmic portion of the chain corresponds to 600–619; the sequence is LARSAAERRNVKRHQAYEFQ. The helical transmembrane segment at 620–638 threads the bilayer; that stretch reads FGAAYAWMMCVFTVVMTYS. At 639-641 the chain is on the extracellular side; that stretch reads ITC. A helical membrane pass occupies residues 642-666; that stretch reads PIIVPFGLMYMLLKHLVDRYNLYYA. The Cytoplasmic segment spans residues 667–673; sequence YLPAKLD. Residues 674–702 form a helical membrane-spanning segment; sequence KKIHSGAVNQVVAAPILCLFWLLFFSTMR. At 703–707 the chain is on the extracellular side; the sequence is TGFLA. The helical transmembrane segment at 708–728 threads the bilayer; it reads PTSMFTFVVLVITIVICLCHV. S-palmitoyl cysteine attachment occurs at residues Cys726 and Cys729. The Cytoplasmic portion of the chain corresponds to 729–832; sequence CFGHFKYLSA…DSLIENEIHQ (104 aa). A disordered region spans residues 780 to 814; that stretch reads EVDGDGDGAPGSSGDEPPSSSSQDEELLMPPDALT. A compositionally biased stretch (low complexity) spans 789–801; it reads PGSSGDEPPSSSS.

The protein belongs to the CSC1 (TC 1.A.17) family. In terms of assembly, monomer. Interacts with SLC19A2; interaction is required for the phospholipid scramblase activity. Palmitoylation is required for localization to the plasma membrane and stability. Post-translationally, N-Glycosylated.

It localises to the cell membrane. The protein localises to the endoplasmic reticulum membrane. It is found in the lysosome membrane. Its subcellular location is the early endosome membrane. The catalysed reaction is Ca(2+)(in) = Ca(2+)(out). It carries out the reaction Mg(2+)(in) = Mg(2+)(out). It catalyses the reaction K(+)(in) = K(+)(out). The enzyme catalyses Na(+)(in) = Na(+)(out). The catalysed reaction is Cs(+)(in) = Cs(+)(out). It carries out the reaction a 1,2-diacyl-sn-glycero-3-phosphocholine(in) = a 1,2-diacyl-sn-glycero-3-phosphocholine(out). It catalyses the reaction a sphingomyelin(in) = a sphingomyelin(out). Functionally, mechanosensitive cation channel with low conductance and high activation threshold. Osmosensitive cation channel preferentially activated by hypotonic stress. Also acts as a phospholipid scramblase in response to changes in membrane structure: upon changes in membrane curvature and thickness, alters its conformation and translocates phospholipids, such as phosphatidylcholine and sphingomyelin, thereby controlling plasma membrane lipid distribution. Forms a heterodimer with SLC19A2, which mediates phospholipid scramblase activity following Ca(2+) stimulation. Expressed in excitatory neurons of the subfornical organ and functions as a thirst receptor that mediates neuronal response to hyperosmolality to drive thirst and drinking behavior. Facilitates intestinal motility by promoting proliferation of intestinal stem cells. Essential for the baby's first breath and respiration throughout life. Upon lung inflation conducts cation currents in alveolar type 1 and 2 cells triggering lamellar body exocytosis and surfactant secretion into airspace. Acts as an osmosensor in cochlear outer hair cells (OHCs) where it mediates calcium influx and regulatory volume decrease response. Required for the maintenance of OHC morphology, OHC survival and normal hearing. The chain is Mechanosensitive cation channel TMEM63B from Homo sapiens (Human).